A 352-amino-acid chain; its full sequence is N-acetyl-gamma-glutamyl-phosphate reductase (352 aa).

Cys151 is a catalytic residue.

Belongs to the NAGSA dehydrogenase family. Type 1 subfamily.

Its subcellular location is the cytoplasm. The catalysed reaction is N-acetyl-L-glutamate 5-semialdehyde + phosphate + NADP(+) = N-acetyl-L-glutamyl 5-phosphate + NADPH + H(+). The protein operates within amino-acid biosynthesis; L-arginine biosynthesis; N(2)-acetyl-L-ornithine from L-glutamate: step 3/4. Catalyzes the NADPH-dependent reduction of N-acetyl-5-glutamyl phosphate to yield N-acetyl-L-glutamate 5-semialdehyde. The sequence is that of N-acetyl-gamma-glutamyl-phosphate reductase from Renibacterium salmoninarum (strain ATCC 33209 / DSM 20767 / JCM 11484 / NBRC 15589 / NCIMB 2235).